We begin with the raw amino-acid sequence, 314 residues long: Probable tRNA pseudouridine synthase B (314 aa).

Basic residues predominate over residues 1–10 (MATRGRHRSR). The disordered stretch occupies residues 1-30 (MATRGRHRSRTSGTSSEPMTLRAPPDERDL). The active-site Nucleophile is the D72. In terms of domain architecture, PUA spans 237–314 (LPRVTIAPSA…LVVELDRMLV (78 aa)).

This sequence belongs to the pseudouridine synthase TruB family. Type 2 subfamily.

It catalyses the reaction uridine(55) in tRNA = pseudouridine(55) in tRNA. Its function is as follows. Could be responsible for synthesis of pseudouridine from uracil-55 in the psi GC loop of transfer RNAs. The protein is Probable tRNA pseudouridine synthase B of Haloarcula marismortui (strain ATCC 43049 / DSM 3752 / JCM 8966 / VKM B-1809) (Halobacterium marismortui).